The sequence spans 338 residues: Aspartate--ammonia ligase (338 aa).

Belongs to the class-II aminoacyl-tRNA synthetase family. AsnA subfamily.

It localises to the cytoplasm. It catalyses the reaction L-aspartate + NH4(+) + ATP = L-asparagine + AMP + diphosphate + H(+). It functions in the pathway amino-acid biosynthesis; L-asparagine biosynthesis; L-asparagine from L-aspartate (ammonia route): step 1/1. In Lactobacillus delbrueckii subsp. bulgaricus (strain ATCC 11842 / DSM 20081 / BCRC 10696 / JCM 1002 / NBRC 13953 / NCIMB 11778 / NCTC 12712 / WDCM 00102 / Lb 14), this protein is Aspartate--ammonia ligase.